Consider the following 177-residue polypeptide: ATP synthase subunit delta (177 aa).

The protein belongs to the ATPase delta chain family. In terms of assembly, F-type ATPases have 2 components, F(1) - the catalytic core - and F(0) - the membrane proton channel. F(1) has five subunits: alpha(3), beta(3), gamma(1), delta(1), epsilon(1). F(0) has three main subunits: a(1), b(2) and c(10-14). The alpha and beta chains form an alternating ring which encloses part of the gamma chain. F(1) is attached to F(0) by a central stalk formed by the gamma and epsilon chains, while a peripheral stalk is formed by the delta and b chains.

The protein resides in the cell inner membrane. Its function is as follows. F(1)F(0) ATP synthase produces ATP from ADP in the presence of a proton or sodium gradient. F-type ATPases consist of two structural domains, F(1) containing the extramembraneous catalytic core and F(0) containing the membrane proton channel, linked together by a central stalk and a peripheral stalk. During catalysis, ATP synthesis in the catalytic domain of F(1) is coupled via a rotary mechanism of the central stalk subunits to proton translocation. Functionally, this protein is part of the stalk that links CF(0) to CF(1). It either transmits conformational changes from CF(0) to CF(1) or is implicated in proton conduction. The polypeptide is ATP synthase subunit delta (Azobacteroides pseudotrichonymphae genomovar. CFP2).